A 94-amino-acid chain; its full sequence is uncharacterized protein (94 aa).

This sequence to M.tuberculosis Rv2632c.

This is an uncharacterized protein from Mycobacterium tuberculosis (strain CDC 1551 / Oshkosh).